Consider the following 127-residue polypeptide: MADDTKWGIAHVHASFNNTIMTVTDQTGAETLAKSSGGSVVKQNRDEASPYAAMQMAEQLAEEVLDQGIEKVHVRVRGPGGNLQRSPGPGAQAAIRALARAGLEIGRIEDVTPIPHDGTRPPKNSGY.

This sequence belongs to the universal ribosomal protein uS11 family. In terms of assembly, part of the 30S ribosomal subunit.

Located on the platform of the 30S subunit. The sequence is that of Small ribosomal subunit protein uS11 from Halobacterium salinarum (strain ATCC 700922 / JCM 11081 / NRC-1) (Halobacterium halobium).